The chain runs to 129 residues: Follitropin subunit beta (129 aa).

Residues 1-20 (MKSLQFCFLFCCWKAICCNS) form the signal peptide. Cystine bridges form between C21/C69, C35/C84, C38/C122, C46/C100, C50/C102, and C105/C112. N-linked (GlcNAc...) asparagine glycosylation is found at N25 and N42.

The protein belongs to the glycoprotein hormones subunit beta family. As to quaternary structure, heterodimer. The active follitropin is a heterodimer composed of an alpha chain/CGA shared with other hormones and a unique beta chain/FSHB shown here.

Its subcellular location is the secreted. In terms of biological role, together with the alpha chain CGA constitutes follitropin, the follicle-stimulating hormone, and provides its biological specificity to the hormone heterodimer. Binds FSHR, a G protein-coupled receptor, on target cells to activate downstream signaling pathways. Follitropin is involved in follicle development and spermatogenesis in reproductive organs. The sequence is that of Follitropin subunit beta (FSHB) from Sus scrofa (Pig).